The following is a 345-amino-acid chain: Histidinol-phosphate aminotransferase (345 aa).

Position 206 is an N6-(pyridoxal phosphate)lysine (lysine 206).

Belongs to the class-II pyridoxal-phosphate-dependent aminotransferase family. Histidinol-phosphate aminotransferase subfamily. Homodimer. The cofactor is pyridoxal 5'-phosphate.

The enzyme catalyses L-histidinol phosphate + 2-oxoglutarate = 3-(imidazol-4-yl)-2-oxopropyl phosphate + L-glutamate. Its pathway is amino-acid biosynthesis; L-histidine biosynthesis; L-histidine from 5-phospho-alpha-D-ribose 1-diphosphate: step 7/9. In Bacteroides fragilis (strain YCH46), this protein is Histidinol-phosphate aminotransferase.